Here is a 253-residue protein sequence, read N- to C-terminus: 5'-nucleotidase SurE (253 aa).

A divalent metal cation-binding residues include aspartate 8, aspartate 9, serine 39, and asparagine 92.

The protein belongs to the SurE nucleotidase family. It depends on a divalent metal cation as a cofactor.

The protein localises to the cytoplasm. It carries out the reaction a ribonucleoside 5'-phosphate + H2O = a ribonucleoside + phosphate. In terms of biological role, nucleotidase that shows phosphatase activity on nucleoside 5'-monophosphates. This Burkholderia vietnamiensis (strain G4 / LMG 22486) (Burkholderia cepacia (strain R1808)) protein is 5'-nucleotidase SurE.